The chain runs to 189 residues: MKYRHLAKKSFLFIFMLAAFKTFAFELPSIPFPSPGSDEILFVVRDTTFNTKEPVNVKVSDFWTNRNVKRKPYKDVHGQSVFITSGTKWLTSYMTVSINNKDYTMAAVSGYKDGFSSVFVKSGQIQLQHYYNSVADFVGGDENSIPSKTYLDETPEYFVNVEAYESGSGNILVMCISNKESYFECESQQ.

A signal peptide spans 1–24; that stretch reads MKYRHLAKKSFLFIFMLAAFKTFA. Cysteine 175 and cysteine 185 form a disulfide bridge.

It belongs to the TDH hemolysin family. In terms of assembly, homodimer.

Bacterial hemolysins are exotoxins that attack blood cell membranes and cause cell rupture by mechanisms not clearly defined. This Grimontia hollisae (Vibrio hollisae) protein is Thermostable direct hemolysin (tdh).